We begin with the raw amino-acid sequence, 635 residues long: 1-deoxy-D-xylulose-5-phosphate synthase (635 aa).

Thiamine diphosphate-binding positions include histidine 77 and glycine 118–alanine 120. Aspartate 149 is a Mg(2+) binding site. Residues glycine 150–serine 151, asparagine 178, phenylalanine 290, and glutamate 375 each bind thiamine diphosphate. Asparagine 178 contacts Mg(2+).

This sequence belongs to the transketolase family. DXPS subfamily. In terms of assembly, homodimer. Mg(2+) serves as cofactor. It depends on thiamine diphosphate as a cofactor.

It carries out the reaction D-glyceraldehyde 3-phosphate + pyruvate + H(+) = 1-deoxy-D-xylulose 5-phosphate + CO2. It functions in the pathway metabolic intermediate biosynthesis; 1-deoxy-D-xylulose 5-phosphate biosynthesis; 1-deoxy-D-xylulose 5-phosphate from D-glyceraldehyde 3-phosphate and pyruvate: step 1/1. Catalyzes the acyloin condensation reaction between C atoms 2 and 3 of pyruvate and glyceraldehyde 3-phosphate to yield 1-deoxy-D-xylulose-5-phosphate (DXP). The polypeptide is 1-deoxy-D-xylulose-5-phosphate synthase (Chlorobium phaeovibrioides (strain DSM 265 / 1930) (Prosthecochloris vibrioformis (strain DSM 265))).